A 104-amino-acid polypeptide reads, in one-letter code: MLETLYQEALKRKKEPKEGSYTSYLYDKGLDKILKKVGEEATEVVIAAKNDDKNEMANETADLLYHMAVALVETGVSLEEVEAVLQARQGKQSRIHDRPEIDQY.

This sequence belongs to the PRA-PH family.

The protein localises to the cytoplasm. It catalyses the reaction 1-(5-phospho-beta-D-ribosyl)-ATP + H2O = 1-(5-phospho-beta-D-ribosyl)-5'-AMP + diphosphate + H(+). It participates in amino-acid biosynthesis; L-histidine biosynthesis; L-histidine from 5-phospho-alpha-D-ribose 1-diphosphate: step 2/9. The protein is Phosphoribosyl-ATP pyrophosphatase of Streptococcus gordonii (strain Challis / ATCC 35105 / BCRC 15272 / CH1 / DL1 / V288).